The primary structure comprises 459 residues: Argininosuccinate lyase (459 aa).

It belongs to the lyase 1 family. Argininosuccinate lyase subfamily.

The protein localises to the cytoplasm. The catalysed reaction is 2-(N(omega)-L-arginino)succinate = fumarate + L-arginine. The protein operates within amino-acid biosynthesis; L-arginine biosynthesis; L-arginine from L-ornithine and carbamoyl phosphate: step 3/3. The protein is Argininosuccinate lyase of Prochlorococcus marinus (strain MIT 9215).